A 110-amino-acid chain; its full sequence is Large ribosomal subunit protein uL22 (110 aa).

This sequence belongs to the universal ribosomal protein uL22 family. As to quaternary structure, part of the 50S ribosomal subunit.

This protein binds specifically to 23S rRNA; its binding is stimulated by other ribosomal proteins, e.g. L4, L17, and L20. It is important during the early stages of 50S assembly. It makes multiple contacts with different domains of the 23S rRNA in the assembled 50S subunit and ribosome. Its function is as follows. The globular domain of the protein is located near the polypeptide exit tunnel on the outside of the subunit, while an extended beta-hairpin is found that lines the wall of the exit tunnel in the center of the 70S ribosome. This is Large ribosomal subunit protein uL22 from Chromohalobacter salexigens (strain ATCC BAA-138 / DSM 3043 / CIP 106854 / NCIMB 13768 / 1H11).